A 460-amino-acid polypeptide reads, in one-letter code: tRNA-2-methylthio-N(6)-dimethylallyladenosine synthase (460 aa).

An MTTase N-terminal domain is found at 10-126; that stretch reads GSYWITTFGC…LEVLLNRVDS (117 aa). [4Fe-4S] cluster-binding residues include cysteine 19, cysteine 55, cysteine 89, cysteine 161, cysteine 165, and cysteine 168. A Radical SAM core domain is found at 147–384; the sequence is RDSSICGWVN…NALVERCARE (238 aa). Residues 387–455 form the TRAM domain; that stretch reads ARYAGRTEEV…SFSLSGTPLP (69 aa).

This sequence belongs to the methylthiotransferase family. MiaB subfamily. In terms of assembly, monomer. The cofactor is [4Fe-4S] cluster.

The protein localises to the cytoplasm. It catalyses the reaction N(6)-dimethylallyladenosine(37) in tRNA + (sulfur carrier)-SH + AH2 + 2 S-adenosyl-L-methionine = 2-methylsulfanyl-N(6)-dimethylallyladenosine(37) in tRNA + (sulfur carrier)-H + 5'-deoxyadenosine + L-methionine + A + S-adenosyl-L-homocysteine + 2 H(+). Catalyzes the methylthiolation of N6-(dimethylallyl)adenosine (i(6)A), leading to the formation of 2-methylthio-N6-(dimethylallyl)adenosine (ms(2)i(6)A) at position 37 in tRNAs that read codons beginning with uridine. In Parasynechococcus marenigrum (strain WH8102), this protein is tRNA-2-methylthio-N(6)-dimethylallyladenosine synthase.